A 118-amino-acid chain; its full sequence is Small ribosomal subunit protein uS13 (118 aa).

A disordered region spans residues 99–118 (GQRTRTNARTRKGPRKAIKK).

It belongs to the universal ribosomal protein uS13 family. In terms of assembly, part of the 30S ribosomal subunit. Forms a loose heterodimer with protein S19. Forms two bridges to the 50S subunit in the 70S ribosome.

Located at the top of the head of the 30S subunit, it contacts several helices of the 16S rRNA. In the 70S ribosome it contacts the 23S rRNA (bridge B1a) and protein L5 of the 50S subunit (bridge B1b), connecting the 2 subunits; these bridges are implicated in subunit movement. Contacts the tRNAs in the A and P-sites. This is Small ribosomal subunit protein uS13 from Xylella fastidiosa (strain M12).